The sequence spans 791 residues: Protein CLASP-2 (791 aa).

3 stretches are compositionally biased toward low complexity: residues 259-271 (ASDA…SVNS), 323-334 (RTPNTRPMTTRT), and 372-381 (SQPGSRNGSP). 3 disordered regions span residues 259–283 (ASDA…SKLS), 315–391 (TRMT…TGTL), and 422–454 (AMNT…PQKS). Residues 422–434 (AMNTAKESLGQPS) show a composition bias toward polar residues.

Belongs to the CLASP family. In terms of assembly, interacts with hcp-1 and hcp-2.

The protein localises to the cytoplasm. Its subcellular location is the cytoskeleton. It localises to the microtubule organizing center. The protein resides in the centrosome. It is found in the chromosome. The protein localises to the centromere. Its subcellular location is the kinetochore. It localises to the spindle. In terms of biological role, probable microtubule plus-end tracking protein that promotes the stabilization of dynamic microtubules. Required for the formation of mitotic and meiotic spindles. Specifically promotes the polymerization of kinetochore-bound microtubules. Also required for cytoplasmic streaming. The sequence is that of Protein CLASP-2 (cls-2) from Caenorhabditis briggsae.